A 226-amino-acid polypeptide reads, in one-letter code: MNPIICALDTQDLNEAISWANGLRDKVGMVKLGLEFFAAHGPSGVREVAKCNVPIFLDLKLYDIPNTVARTVEAIKALDVEMLTLHISGGTKMLKEALSIVQGKKIKLIGVTVLTSMGNEDLSELGVAREAKSQVILLAKLAKKIGLHGVVCSALEAQEVRQECGKDFKIITPGIRMNRGHDDQKRTATPKEAINSGADYIVIGRPITESSNPASSAELILKSLTD.

Substrate-binding positions include Asp9, Lys31, 58 to 67 (DLKLYDIPNT), Thr115, Arg176, Gln184, Gly204, and Arg205. The active-site Proton donor is Lys60.

The protein belongs to the OMP decarboxylase family. Type 1 subfamily. Homodimer.

The enzyme catalyses orotidine 5'-phosphate + H(+) = UMP + CO2. Its pathway is pyrimidine metabolism; UMP biosynthesis via de novo pathway; UMP from orotate: step 2/2. Its function is as follows. Catalyzes the decarboxylation of orotidine 5'-monophosphate (OMP) to uridine 5'-monophosphate (UMP). The chain is Orotidine 5'-phosphate decarboxylase from Wolbachia pipientis subsp. Culex pipiens (strain wPip).